Here is a 104-residue protein sequence, read N- to C-terminus: uncharacterized protein (104 aa).

A disordered region spans residues 51 to 70 (NPGRSLDNNKDVSDKGRSEF). Positions 57–70 (DNNKDVSDKGRSEF) are enriched in basic and acidic residues.

This sequence belongs to the protein-tyrosine phosphatase family.

This is an uncharacterized protein from Xanthomonas campestris pv. campestris (strain ATCC 33913 / DSM 3586 / NCPPB 528 / LMG 568 / P 25).